Here is a 210-residue protein sequence, read N- to C-terminus: Large ribosomal subunit protein uL4 (210 aa).

Residues glutamine 44–arginine 54 are compositionally biased toward polar residues. A disordered region spans residues glutamine 44–serine 96. Over residues glycine 60 to glycine 71 the composition is skewed to basic residues.

The protein belongs to the universal ribosomal protein uL4 family. Part of the 50S ribosomal subunit.

Its function is as follows. One of the primary rRNA binding proteins, this protein initially binds near the 5'-end of the 23S rRNA. It is important during the early stages of 50S assembly. It makes multiple contacts with different domains of the 23S rRNA in the assembled 50S subunit and ribosome. In terms of biological role, forms part of the polypeptide exit tunnel. In Prochlorococcus marinus (strain MIT 9515), this protein is Large ribosomal subunit protein uL4.